We begin with the raw amino-acid sequence, 494 residues long: Glutamyl-tRNA reductase (494 aa).

Residues 58-61, serine 118, 123-125, and glutamine 129 contribute to the substrate site; these read TCNR and EQQ. Cysteine 59 functions as the Nucleophile in the catalytic mechanism. 205 to 210 lines the NADP(+) pocket; it reads GAGAMA. The tract at residues 448-494 is disordered; that stretch reads KGANAGSGQRKKQKPQENRVSTARAVYRSTYQDLTQASTPGGKDDDQ. The segment covering 476–486 has biased composition (polar residues); it reads STYQDLTQAST.

It belongs to the glutamyl-tRNA reductase family. As to quaternary structure, homodimer.

It carries out the reaction (S)-4-amino-5-oxopentanoate + tRNA(Glu) + NADP(+) = L-glutamyl-tRNA(Glu) + NADPH + H(+). It participates in porphyrin-containing compound metabolism; protoporphyrin-IX biosynthesis; 5-aminolevulinate from L-glutamyl-tRNA(Glu): step 1/2. Catalyzes the NADPH-dependent reduction of glutamyl-tRNA(Glu) to glutamate 1-semialdehyde (GSA). The chain is Glutamyl-tRNA reductase from Corynebacterium urealyticum (strain ATCC 43042 / DSM 7109).